The sequence spans 878 residues: Aconitase htyD (878 aa).

Residues glutamine 173 and 290-292 (DSH) contribute to the substrate site. Residues cysteine 472, cysteine 535, and cysteine 538 each coordinate [4Fe-4S] cluster. 2 residues coordinate substrate: arginine 558 and arginine 563. A disordered region spans residues 626–671 (IAIANQRTKPAPTMPAYVEPYRSFQPPVPPSSDQPQSMKDHGKTSN). Substrate is bound at residue 742–743 (SR).

Belongs to the aconitase/IPM isomerase family.

The protein operates within antifungal biosynthesis. Aconitase; part of the gene cluster that mediates the de novo generation of L-homotyrosine from acetyl-CoA and 4-hydroxyphenyl-pyruvate. L-homotyrosine is a building block of echinocandin B, a fungal lipidated cyclic hexapeptide that acts as an antifungal agent. L-homotyrosine 4-hydroxyphenyl-pyruvate first undergoes an aldol-type condensation by htyA with the C-2 of acetyl-CoA followed by the release of CoA to form 2-(4-hydroxybenzyl)-malate. This is followed by isomerization of 2-(4-hydroxy-benzyl)-malate to 3-(4-hydroxybenzyl)-malate by htyD. Thereafter, 3-(4-hydroxybenzyl)-malate undergoes decarboxylation and oxidation to form 2-oxo-4-(4-hydroxybenzyl)butanoic acid, coupled to reduction of NAD(+) to NADH by htyC. The product then undergoes transamination catalyzed by htyB to form L-homotyrosine. The polypeptide is Aconitase htyD (Aspergillus rugulosus (Emericella rugulosa)).